Consider the following 381-residue polypeptide: Cytochrome P450 105C1 (381 aa).

Residue cysteine 330 coordinates heme.

It belongs to the cytochrome P450 family. Requires heme as cofactor.

It is found in the cytoplasm. In Streptomyces sp, this protein is Cytochrome P450 105C1 (cyp105C1).